The primary structure comprises 163 residues: Lipoprotein signal peptidase (163 aa).

Helical transmembrane passes span 9-29 (AWPW…SKYL), 42-62 (ILPF…SFLG), 67-87 (WQII…ILWL), and 93-113 (SEIM…GNFI). Catalysis depends on residues aspartate 123 and aspartate 141. The helical transmembrane segment at 137–157 (FNVADSAICVGVFLLIVHMLL) threads the bilayer.

Belongs to the peptidase A8 family.

Its subcellular location is the cell inner membrane. The catalysed reaction is Release of signal peptides from bacterial membrane prolipoproteins. Hydrolyzes -Xaa-Yaa-Zaa-|-(S,diacylglyceryl)Cys-, in which Xaa is hydrophobic (preferably Leu), and Yaa (Ala or Ser) and Zaa (Gly or Ala) have small, neutral side chains.. The protein operates within protein modification; lipoprotein biosynthesis (signal peptide cleavage). This protein specifically catalyzes the removal of signal peptides from prolipoproteins. The polypeptide is Lipoprotein signal peptidase (Coxiella burnetii (strain RSA 331 / Henzerling II)).